The following is a 789-amino-acid chain: GDH/6PGL endoplasmic bifunctional protein (789 aa).

Positions 1–16 (MLLAAMCLALLGCLQA) are cleaved as a signal peptide. Pyrrolidone carboxylic acid is present on glutamine 17. The segment at 17-524 (QELKGHVSII…GGQLTFSQQQ (508 aa)) is hexose-6-phosphate dehydrogenase. NADP(+) contacts are provided by residues 29-36 (GATGDLAK) and tyrosine 146. N-linked (GlcNAc...) asparagine glycosylation occurs at asparagine 154. Lysine 171 provides a ligand contact to NADP(+). D-glucose 6-phosphate is bound by residues lysine 171, 201–205 (HYLGK), glutamate 240, and aspartate 259. The residue at position 205 (lysine 205) is an N6-succinyllysine. The Proton acceptor role is filled by histidine 264. Asparagine 279 carries N-linked (GlcNAc...) asparagine glycosylation. Lysine 357 and arginine 362 together coordinate D-glucose 6-phosphate. Residue arginine 367 participates in NADP(+) binding. N6-succinyllysine is present on lysine 424. Residues 525–538 (LEVLIPDLGSVPKP) form a linker region. The segment at 539 to 789 (SDFQVLGARY…WYMDYEAFLG (251 aa)) is 6-phosphogluconolactonase. Tryptophan 615 contacts NADP(+). An N-linked (GlcNAc...) asparagine glycan is attached at asparagine 681.

It in the N-terminal section; belongs to the glucose-6-phosphate dehydrogenase family. This sequence in the C-terminal section; belongs to the glucosamine/galactosamine-6-phosphate isomerase family. 6-phosphogluconolactonase subfamily. Homodimer. Expressed in liver (at protein level). Expressed in muscles. Expressed in adipose tissues.

It localises to the endoplasmic reticulum lumen. It catalyses the reaction D-glucose 6-phosphate + NAD(+) = 6-phospho-D-glucono-1,5-lactone + NADH + H(+). It carries out the reaction D-glucose 6-phosphate + NADP(+) = 6-phospho-D-glucono-1,5-lactone + NADPH + H(+). The enzyme catalyses 6-phospho-D-glucono-1,5-lactone + H2O = 6-phospho-D-gluconate + H(+). The catalysed reaction is 2-deoxy-D-glucose 6-phosphate + NAD(+) = 2-deoxy-6-phospho-D-glucono-1,5-lactone + NADH + H(+). It catalyses the reaction 2-deoxy-D-glucose 6-phosphate + NADP(+) = 2-deoxy-6-phospho-D-glucono-1,5-lactone + NADPH + H(+). It carries out the reaction D-galactose 6-phosphate + NADP(+) = 6-phospho-D-galactono-1,5-lactone + NADPH + H(+). The enzyme catalyses D-galactose 6-phosphate + NAD(+) = 6-phospho-D-galactono-1,5-lactone + NADH + H(+). The catalysed reaction is D-glucosamine 6-phosphate + NADP(+) = 2-amino-2-deoxy-6-phospho-D-glucono-1,5-lactone + NADPH + 2 H(+). It catalyses the reaction D-glucose + NAD(+) = D-glucono-1,5-lactone + NADH + H(+). It carries out the reaction D-glucose + NADP(+) = D-glucono-1,5-lactone + NADPH + H(+). The enzyme catalyses D-glucose 6-sulfate + NADP(+) = 6-sulfo-D-glucono-1,5-lactone + NADPH + H(+). Its pathway is carbohydrate degradation; pentose phosphate pathway; D-ribulose 5-phosphate from D-glucose 6-phosphate (oxidative stage). The protein operates within carbohydrate degradation; pentose phosphate pathway; D-ribulose 5-phosphate from D-glucose 6-phosphate (oxidative stage): step 2/3. Its function is as follows. Bifunctional enzyme localized in the lumen of the endoplasmic reticulum that catalyzes the first two steps of the oxidative branch of the pentose phosphate pathway/shunt, an alternative to glycolysis and a major source of reducing power and metabolic intermediates for biosynthetic processes. Has a hexose-6-phosphate dehydrogenase activity, with broad substrate specificity compared to glucose-6-phosphate 1-dehydrogenase/G6PD, and catalyzes the first step of the pentose phosphate pathway. In addition, acts as a 6-phosphogluconolactonase and catalyzes the second step of the pentose phosphate pathway. May have a dehydrogenase activity for alternative substrates including glucosamine 6-phosphate and glucose 6-sulfate. The main function of this enzyme is to provide reducing equivalents such as NADPH to maintain the adequate levels of reductive cofactors in the oxidizing environment of the endoplasmic reticulum. By producing NADPH that is needed by reductases of the lumen of the endoplasmic reticulum like corticosteroid 11-beta-dehydrogenase isozyme 1/HSD11B1, indirectly regulates their activity. This is GDH/6PGL endoplasmic bifunctional protein from Mus musculus (Mouse).